The chain runs to 522 residues: Cytochrome P450 4e5, mitochondrial (522 aa).

Glu-307 and Cys-443 together coordinate heme.

This sequence belongs to the cytochrome P450 family. Heme serves as cofactor.

The protein resides in the mitochondrion. Probably involved in steroid hormones biosynthesis. This is Cytochrome P450 4e5, mitochondrial (Cyp4e5) from Drosophila mettleri (Fruit fly).